The primary structure comprises 131 residues: Small ribosomal subunit protein uS8 (131 aa).

The protein belongs to the universal ribosomal protein uS8 family. Part of the 30S ribosomal subunit. Contacts proteins S5 and S12.

In terms of biological role, one of the primary rRNA binding proteins, it binds directly to 16S rRNA central domain where it helps coordinate assembly of the platform of the 30S subunit. This chain is Small ribosomal subunit protein uS8, found in Finegoldia magna (strain ATCC 29328 / DSM 20472 / WAL 2508) (Peptostreptococcus magnus).